Consider the following 493-residue polypeptide: Xylulose kinase (493 aa).

84–85 lines the substrate pocket; it reads QH. The active-site Proton acceptor is the Asp247.

This sequence belongs to the FGGY kinase family.

It catalyses the reaction D-xylulose + ATP = D-xylulose 5-phosphate + ADP + H(+). In terms of biological role, catalyzes the phosphorylation of D-xylulose to D-xylulose 5-phosphate. The polypeptide is Xylulose kinase (Haemophilus influenzae (strain ATCC 51907 / DSM 11121 / KW20 / Rd)).